Reading from the N-terminus, the 316-residue chain is N-acetylmuramic acid 6-phosphate etherase (316 aa).

The 164-residue stretch at I68 to K231 folds into the SIS domain. The active-site Proton donor is E96. The active site involves E127.

It belongs to the GCKR-like family. MurNAc-6-P etherase subfamily. Homodimer.

The catalysed reaction is N-acetyl-D-muramate 6-phosphate + H2O = N-acetyl-D-glucosamine 6-phosphate + (R)-lactate. Its pathway is amino-sugar metabolism; N-acetylmuramate degradation. Specifically catalyzes the cleavage of the D-lactyl ether substituent of MurNAc 6-phosphate, producing GlcNAc 6-phosphate and D-lactate. This chain is N-acetylmuramic acid 6-phosphate etherase, found in Prochlorococcus marinus (strain MIT 9313).